Here is a 255-residue protein sequence, read N- to C-terminus: BPI fold-containing family A member 1 (255 aa).

An N-terminal signal peptide occupies residues 1 to 19; the sequence is MFHIGSLVVLCGLLAPTTA. The important for surfactant activity and antibacterial properties stretch occupies residues 87–92; it reads LLGSLL. N-linked (GlcNAc...) asparagine glycosylation is found at asparagine 157, asparagine 178, and asparagine 205. A disulfide bond links cysteine 179 and cysteine 223.

Belongs to the BPI/LBP/Plunc superfamily. Plunc family. As to quaternary structure, monomer. Interacts (via N-terminus) with SCNN1B, a subunit of the heterotrimeric epithelial sodium channel (ENaC); this inhibits proteolytic activation of ENaC. In terms of tissue distribution, expressed in trachea, and at lower levels in nasal epithelium.

The protein resides in the secreted. In terms of biological role, lipid-binding protein which shows high specificity for the surfactant phospholipid dipalmitoylphosphatidylcholine (DPPC). Plays a role in the innate immune responses of the upper airways. Reduces the surface tension in secretions from airway epithelia and inhibits the formation of biofilm by pathogenic Gram-negative bacteria, such as P.aeruginosa and K.pneumoniae. Negatively regulates proteolytic cleavage of SCNN1G, an event that is required for activation of the epithelial sodium channel (ENaC), and thereby contributes to airway surface liquid homeostasis and proper clearance of mucus. Plays a role in the airway inflammatory response after exposure to irritants. May attract macrophages and neutrophils. This is BPI fold-containing family A member 1 (BPIFA1) from Bos taurus (Bovine).